The sequence spans 318 residues: Beta-sarcoglycan (318 aa).

Positions 1 to 32 (MAAAAAAAAEQQSSNGPVKKSMREKAVERRSV) are disordered. Over 1 to 65 (MAAAAAAAAE…GLRGRKGNLA (65 aa)) the chain is Cytoplasmic. Residues 21–32 (SMREKAVERRSV) show a composition bias toward basic and acidic residues. A helical; Signal-anchor for type II membrane protein membrane pass occupies residues 66–86 (ICVIILLFILAVINLIITLVI). Over 87 to 318 (WAVIRIGPNG…ISDNPCGNTH (232 aa)) the chain is Extracellular. Residues Asn-158, Asn-211, and Asn-258 are each glycosylated (N-linked (GlcNAc...) asparagine). Intrachain disulfides connect Cys-288–Cys-314 and Cys-290–Cys-307.

The protein belongs to the sarcoglycan beta/delta/gamma/zeta family. Cross-link to form 2 major subcomplexes: one consisting of SGCB, SGCD and SGCG and the other consisting of SGCB and SGCD. The association between SGCB and SGCG is particularly strong while SGCA is loosely associated with the other sarcoglycans. In terms of processing, disulfide bonds are present. As to expression, highest expression in heart and skeletal muscle. Low expression in brain, kidney, placenta, pancreas and lung. High expression in fetal brain. Also found in fetal lung, kidney and liver.

It localises to the cell membrane. The protein resides in the sarcolemma. The protein localises to the cytoplasm. Its subcellular location is the cytoskeleton. Functionally, component of the sarcoglycan complex, a subcomplex of the dystrophin-glycoprotein complex which forms a link between the F-actin cytoskeleton and the extracellular matrix. The protein is Beta-sarcoglycan (SGCB) of Homo sapiens (Human).